The chain runs to 595 residues: Putative laccase-18 (595 aa).

Residues 1–29 (MEKLSTAASLFGVVVAATALAMAVVGGEA) form the signal peptide. 2 consecutive Plastocyanin-like domains span residues 37-153 (MVHE…PRDG) and 162-316 (KDVP…YTGA). Residues Asn42 and Asn48 are each glycosylated (N-linked (GlcNAc...) asparagine). Residues His87 and His89 each coordinate Cu cation. N-linked (GlcNAc...) asparagine glycosylation occurs at Asn121. Cu cation contacts are provided by His132 and His134. Residues Asn206, Asn345, Asn382, Asn402, Asn409, Asn439, and Asn470 are each glycosylated (N-linked (GlcNAc...) asparagine). One can recognise a Plastocyanin-like 3 domain in the interval 429–571 (DFPVRPPRPF…ATAFIVEDGP (143 aa)). Cu cation-binding residues include Asn488, His491, His493, His550, Cys551, His552, His556, and Met561. The interval 570 to 595 (GPTPETSLPPPPPEFKRCGTNGLSQP) is disordered.

This sequence belongs to the multicopper oxidase family. Requires Cu cation as cofactor.

The protein localises to the secreted. It is found in the extracellular space. Its subcellular location is the apoplast. The catalysed reaction is 4 hydroquinone + O2 = 4 benzosemiquinone + 2 H2O. Its function is as follows. Lignin degradation and detoxification of lignin-derived products. The chain is Putative laccase-18 (LAC18) from Oryza sativa subsp. indica (Rice).